A 549-amino-acid chain; its full sequence is Glucose-6-phosphate isomerase (549 aa).

Residue E353 is the Proton donor of the active site. Catalysis depends on residues H384 and K510.

It belongs to the GPI family.

It localises to the cytoplasm. It carries out the reaction alpha-D-glucose 6-phosphate = beta-D-fructose 6-phosphate. It participates in carbohydrate biosynthesis; gluconeogenesis. Its pathway is carbohydrate degradation; glycolysis; D-glyceraldehyde 3-phosphate and glycerone phosphate from D-glucose: step 2/4. Its function is as follows. Catalyzes the reversible isomerization of glucose-6-phosphate to fructose-6-phosphate. This is Glucose-6-phosphate isomerase from Mycolicibacterium smegmatis (strain ATCC 700084 / mc(2)155) (Mycobacterium smegmatis).